A 1052-amino-acid polypeptide reads, in one-letter code: 3-hydroxy-3-methylglutaryl coenzyme A reductase mokG (1052 aa).

A run of 6 helical transmembrane segments spans residues 223 to 243 (VDMA…VSLF), 253 to 273 (FWLA…GLGV), 279 to 299 (VPVD…TVGF), 349 to 369 (GWSI…GAVF), 378 to 398 (FCFL…TFYA), and 440 to 460 (WKLI…SSFF). The region spanning 224–403 (DMAIIGLGYL…FTFYATILCV (180 aa)) is the SSD domain. The linker stretch occupies residues 461–617 (YRIMGGFMTN…FKANQAESLT (157 aa)). The tract at residues 571–594 (APKESAAPAPPSSPASVPSAVPVP) is disordered. Residues 584 to 594 (PASVPSAVPVP) show a composition bias toward low complexity. Residues 618-1044 (DDELAELCLR…LVNAHMRHNR (427 aa)) are catalytic. E734 (charge relay system) is an active-site residue. N798 is a glycosylation site (N-linked (GlcNAc...) asparagine). Residues K867 and D943 each act as charge relay system in the active site. The active-site Proton donor is H1039. N-linked (GlcNAc...) asparagine glycosylation is present at N1043.

The protein belongs to the HMG-CoA reductase family.

It is found in the endoplasmic reticulum membrane. The catalysed reaction is (R)-mevalonate + 2 NADP(+) + CoA = (3S)-3-hydroxy-3-methylglutaryl-CoA + 2 NADPH + 2 H(+). It participates in polyketide biosynthesis; lovastatin biosynthesis. Its function is as follows. HMG-CoA reductase; part of the gene cluster that mediates the biosynthesis of monakolin K, also known as lovastatin, and which acts as a potent competitive inhibitor of HMG-CoA reductase. Monakolin K biosynthesis is performed in two stages. The first stage is catalyzed by the nonaketide synthase mokA, which belongs to type I polyketide synthases and catalyzes the iterative nine-step formation of the polyketide. This PKS stage is completed by the action of dehydrogenase mokE, which catalyzes the NADPH-dependent reduction of the unsaturated tetra-, penta- and heptaketide intermediates that arise during the mokA-mediated biosynthesis of the nonaketide chain and leads to dihydromonacolin L. Covalently bound dihydromonacolin L is released from mokA by the mokD esterase. Conversion of dihydromonacolin L into monacolin L and then monacolin J is subsequently performed with the participation of molecular oxygen and P450 monoogygenase mokC. Finally, mokF performs the conversion of monacoline J to monacoline K through the addition of the side-chain diketide moiety (2R)-2-methylbutanoate produced by the diketide synthase mokB. HMG-CoA reductase mokG may act as a down-regulator of monacolin K production. The sequence is that of 3-hydroxy-3-methylglutaryl coenzyme A reductase mokG from Monascus pilosus (Red mold).